Reading from the N-terminus, the 133-residue chain is Methylglyoxal synthase (133 aa).

The 133-residue stretch at Met-1–Gly-133 folds into the MGS-like domain. Substrate-binding positions include His-12, Lys-16, Thr-38–Thr-41, and Ser-58–Gly-59. The active-site Proton donor/acceptor is the Asp-64. His-91 contacts substrate.

Belongs to the methylglyoxal synthase family.

It carries out the reaction dihydroxyacetone phosphate = methylglyoxal + phosphate. Catalyzes the formation of methylglyoxal from dihydroxyacetone phosphate. This Cupriavidus taiwanensis (strain DSM 17343 / BCRC 17206 / CCUG 44338 / CIP 107171 / LMG 19424 / R1) (Ralstonia taiwanensis (strain LMG 19424)) protein is Methylglyoxal synthase.